A 403-amino-acid polypeptide reads, in one-letter code: 3-oxoacyl-[acyl-carrier-protein] synthase 2 (403 aa).

Residues 1-403 form the Ketosynthase family 3 (KS3) domain; that stretch reads VITGMGALSP…GGHNAVLVFK (403 aa). Active-site for beta-ketoacyl synthase activity residues include Cys158, His297, and His334.

Belongs to the thiolase-like superfamily. Beta-ketoacyl-ACP synthases family.

It carries out the reaction a fatty acyl-[ACP] + malonyl-[ACP] + H(+) = a 3-oxoacyl-[ACP] + holo-[ACP] + CO2. The enzyme catalyses (9Z)-hexadecenoyl-[ACP] + malonyl-[ACP] + H(+) = 3-oxo-(11Z)-octadecenoyl-[ACP] + holo-[ACP] + CO2. It participates in lipid metabolism; fatty acid biosynthesis. Involved in the type II fatty acid elongation cycle. Catalyzes the elongation of a wide range of acyl-ACP by the addition of two carbons from malonyl-ACP to an acyl acceptor. Can efficiently catalyze the conversion of palmitoleoyl-ACP (cis-hexadec-9-enoyl-ACP) to cis-vaccenoyl-ACP (cis-octadec-11-enoyl-ACP), an essential step in the thermal regulation of fatty acid composition. The chain is 3-oxoacyl-[acyl-carrier-protein] synthase 2 (fabF) from Staphylococcus aureus.